The sequence spans 376 residues: MECIIKLPQRFNKNKSKKNPLRIFDSTVLNHQPDHIPQEFVWPDHEKPSKNVPILQVPVIDLAGFLSNDPLLVSEAERLVSEAAKKHGFFLVTNHGVDERLLSTAHKLMDTFFKSPNYEKLKAQRKVGETTGYASSFVGRFKENLPWKETLSFSFSPTEKSENYSQTVKNYISKTMGDGYKDFGSVYQEYAETMSNLSLKIMELLGMSLGIKREHFREFFEDNESIFRLNYYPKCKQPDLVLGTGPHCDPTSLTILQQDQVSGLQVFVDNQWQSIPPIPQALVVNIGDTLMALTNGIYKSCLHRAVVNGETTRKTLAFFLCPKVDKVVKPPSELEGERAYPDFTWSMFLEFTMKHYRADMNTLEEFTNWLKNKGSF.

One can recognise a Fe2OG dioxygenase domain in the interval 222-322; it reads DNESIFRLNY…RKTLAFFLCP (101 aa). Fe cation is bound by residues His247, Asp249, and His303. Arg313 is a catalytic residue.

It belongs to the iron/ascorbate-dependent oxidoreductase family. GA20OX subfamily. It depends on Fe(2+) as a cofactor. Requires L-ascorbate as cofactor. As to expression, expressed in roots. Detected in leaves, inflorescences and siliques, but not in stems and dry seeds.

It catalyses the reaction gibberellin A12 + 2 2-oxoglutarate + 3 O2 + H(+) = gibberellin A9 + 2 succinate + 3 CO2 + 2 H2O. It carries out the reaction gibberellin A53 + 2 2-oxoglutarate + 3 O2 + H(+) = gibberellin A20 + 2 succinate + 3 CO2 + 2 H2O. Its pathway is plant hormone biosynthesis; gibberellin biosynthesis. Key oxidase enzyme in the biosynthesis of gibberellin that catalyzes the conversion of GA12 and GA53 to GA9 and GA20 respectively, via a three-step oxidation at C-20 of the GA skeleton. In Arabidopsis thaliana (Mouse-ear cress), this protein is Gibberellin 20 oxidase 4 (GA20OX4).